We begin with the raw amino-acid sequence, 51 residues long: Sperm protamine P1 (51 aa).

It belongs to the protamine P1 family. In terms of tissue distribution, testis.

It is found in the nucleus. Its subcellular location is the chromosome. In terms of biological role, protamines substitute for histones in the chromatin of sperm during the haploid phase of spermatogenesis. They compact sperm DNA into a highly condensed, stable and inactive complex. This is Sperm protamine P1 (PRM1) from Trachypithecus johnii (Nilgiri langur).